The chain runs to 320 residues: 33 kDa chaperonin (320 aa).

A compositionally biased stretch (basic and acidic residues) spans 1–17 (MTDASGSERLKRTKDIS). The disordered stretch occupies residues 1-27 (MTDASGSERLKRTKDISESTPPSSLPD). Cystine bridges form between Cys-262–Cys-264 and Cys-295–Cys-298.

It belongs to the HSP33 family. Under oxidizing conditions two disulfide bonds are formed involving the reactive cysteines. Under reducing conditions zinc is bound to the reactive cysteines and the protein is inactive.

The protein localises to the cytoplasm. Functionally, redox regulated molecular chaperone. Protects both thermally unfolding and oxidatively damaged proteins from irreversible aggregation. Plays an important role in the bacterial defense system toward oxidative stress. The chain is 33 kDa chaperonin from Synechococcus sp. (strain JA-3-3Ab) (Cyanobacteria bacterium Yellowstone A-Prime).